The following is a 110-amino-acid chain: UPF0060 membrane protein Rpal_4363 (110 aa).

Transmembrane regions (helical) follow at residues 4–24 (LLTF…FWAW), 31–51 (PLWL…LTLA), 59–79 (AYAA…WAIE), and 88–108 (VIGA…PRAL).

The protein belongs to the UPF0060 family.

Its subcellular location is the cell inner membrane. The chain is UPF0060 membrane protein Rpal_4363 from Rhodopseudomonas palustris (strain TIE-1).